A 136-amino-acid chain; its full sequence is MQTTGALLISPALIRSCTRGLIRPVSASFLSRPEIPSVQPSYSSGPLQVARREFQTSVVSRDIDTAAKFIGAGAATVGVAGSGAGIGTVFGSLIIGYARNPSLKQQLFSYAILGFALSEAMGLFCLMVAFLILFAM.

The transit peptide at 1-61 (MQTTGALLIS…REFQTSVVSR (61 aa)) directs the protein to the mitochondrion. A helical membrane pass occupies residues 77–97 (VGVAGSGAGIGTVFGSLIIGY). Position 104 is an N6,N6,N6-trimethyllysine (Lys104). A helical membrane pass occupies residues 112–132 (ILGFALSEAMGLFCLMVAFLI).

This sequence belongs to the ATPase C chain family. In terms of assembly, homooctamer; the c-ring consists of eight c subunits forming a circle, and each subunit adopts a hairpin shape. Component of the ATP synthase complex composed at least of ATP5F1A/subunit alpha, ATP5F1B/subunit beta, ATP5MC1/subunit c (homooctomer), MT-ATP6/subunit a, MT-ATP8/subunit 8, ATP5ME/subunit e, ATP5MF/subunit f, ATP5MG/subunit g, ATP5MK/subunit k, ATP5MJ/subunit j, ATP5F1C/subunit gamma, ATP5F1D/subunit delta, ATP5F1E/subunit epsilon, ATP5PF/subunit F6, ATP5PB/subunit b, ATP5PD/subunit d, ATP5PO/subunit OSCP. ATP synthase complex consists of a soluble F(1) head domain (subunits alpha(3) and beta(3)) - the catalytic core - and a membrane F(0) domain - the membrane proton channel (subunits c, a, 8, e, f, g, k and j). These two domains are linked by a central stalk (subunits gamma, delta, and epsilon) rotating inside the F1 region and a stationary peripheral stalk (subunits F6, b, d, and OSCP). Interacts with TMEM70 (homooligomer form); this interaction facilitates the oligomer formation of subunit c/ATP5MC1 (c-ring) and the c-ring membrane insertion and also protects ATP5MC1 against intramitochondrial proteolysis. In terms of processing, trimethylated by ATPSCKMT at Lys-104. Methylation is required for proper incorporation of the C subunit into the ATP synthase complex and mitochondrial respiration.

It localises to the mitochondrion membrane. The catalysed reaction is H(+)(in) = H(+)(out). In terms of biological role, subunit c, of the mitochondrial membrane ATP synthase complex (F(1)F(0) ATP synthase or Complex V) that produces ATP from ADP in the presence of a proton gradient across the membrane which is generated by electron transport complexes of the respiratory chain. ATP synthase complex consist of a soluble F(1) head domain - the catalytic core - and a membrane F(1) domain - the membrane proton channel. These two domains are linked by a central stalk rotating inside the F(1) region and a stationary peripheral stalk. During catalysis, ATP synthesis in the catalytic domain of F(1) is coupled via a rotary mechanism of the central stalk subunits to proton translocation. With the subunit a (MT-ATP6), forms the proton-conducting channel in the F(0) domain, that contains two crucial half-channels (inlet and outlet) that facilitate proton movement from the mitochondrial intermembrane space (IMS) into the matrix. Protons are taken up via the inlet half-channel and released through the outlet half-channel, following a Grotthuss mechanism. This chain is ATP synthase F(0) complex subunit C1, mitochondrial, found in Ovis aries (Sheep).